The primary structure comprises 44 residues: Protein PsbN (44 aa).

The helical transmembrane segment at 6–26 (FFFSLFVWCLLLSITAYSLYV) threads the bilayer.

The protein belongs to the PsbN family.

It is found in the plastid. The protein resides in the chloroplast thylakoid membrane. Functionally, may play a role in photosystem I and II biogenesis. The sequence is that of Protein PsbN from Tupiella akineta (Green alga).